Consider the following 86-residue polypeptide: UPF0180 protein CA_C1486 (86 aa).

This sequence belongs to the UPF0180 family.

This chain is UPF0180 protein CA_C1486, found in Clostridium acetobutylicum (strain ATCC 824 / DSM 792 / JCM 1419 / IAM 19013 / LMG 5710 / NBRC 13948 / NRRL B-527 / VKM B-1787 / 2291 / W).